We begin with the raw amino-acid sequence, 612 residues long: UvrABC system protein C (612 aa).

In terms of domain architecture, GIY-YIG spans 20–98 (THSGVYRMLD…IKQHRPKYNI (79 aa)). The UVR domain occupies 208–243 (SSVLEEISAKMYQASEDMEYEKAQVYRDQLVILRKL).

Belongs to the UvrC family. In terms of assembly, interacts with UvrB in an incision complex.

It is found in the cytoplasm. The UvrABC repair system catalyzes the recognition and processing of DNA lesions. UvrC both incises the 5' and 3' sides of the lesion. The N-terminal half is responsible for the 3' incision and the C-terminal half is responsible for the 5' incision. This Francisella philomiragia subsp. philomiragia (strain ATCC 25017 / CCUG 19701 / FSC 153 / O#319-036) protein is UvrABC system protein C.